The following is a 276-amino-acid chain: ATP synthase subunit a (276 aa).

The next 6 helical transmembrane spans lie at 47-67 (WHIDSLLFSVGLGVLFLWLFY), 107-127 (IAPLGLTIFVWVFLMNLMDLI), 152-172 (DLNVTLGLALSVFALIVFYSI), 188-208 (PFNHWALIPINFVLETVTLVA), 226-246 (LIFILIALMPWWAQFALSVPW), and 247-267 (AIFHILVIVLQAFIFMMLTIV).

This sequence belongs to the ATPase A chain family. As to quaternary structure, F-type ATPases have 2 components, CF(1) - the catalytic core - and CF(0) - the membrane proton channel. CF(1) has five subunits: alpha(3), beta(3), gamma(1), delta(1), epsilon(1). CF(0) has three main subunits: a(1), b(2) and c(9-12). The alpha and beta chains form an alternating ring which encloses part of the gamma chain. CF(1) is attached to CF(0) by a central stalk formed by the gamma and epsilon chains, while a peripheral stalk is formed by the delta and b chains.

It is found in the cell inner membrane. Key component of the proton channel; it plays a direct role in the translocation of protons across the membrane. The polypeptide is ATP synthase subunit a (Shewanella pealeana (strain ATCC 700345 / ANG-SQ1)).